The following is a 735-amino-acid chain: 1,4-alpha-glucan branching enzyme GlgB (735 aa).

The active-site Nucleophile is the D414. The active-site Proton donor is E469.

The protein belongs to the glycosyl hydrolase 13 family. GlgB subfamily. In terms of assembly, monomer.

The catalysed reaction is Transfers a segment of a (1-&gt;4)-alpha-D-glucan chain to a primary hydroxy group in a similar glucan chain.. Its pathway is glycan biosynthesis; glycogen biosynthesis. Catalyzes the formation of the alpha-1,6-glucosidic linkages in glycogen by scission of a 1,4-alpha-linked oligosaccharide from growing alpha-1,4-glucan chains and the subsequent attachment of the oligosaccharide to the alpha-1,6 position. This is 1,4-alpha-glucan branching enzyme GlgB from Burkholderia lata (strain ATCC 17760 / DSM 23089 / LMG 22485 / NCIMB 9086 / R18194 / 383).